The following is a 309-amino-acid chain: Dihydroorotate dehydrogenase B (NAD(+)), catalytic subunit (309 aa).

FMN is bound by residues serine 21 and 45–46; that span reads KA. Substrate contacts are provided by residues lysine 45 and 69 to 73; that span reads NAIGL. FMN is bound by residues asparagine 99 and asparagine 127. A substrate-binding site is contributed by asparagine 127. Cysteine 130 serves as the catalytic Nucleophile. FMN is bound by residues lysine 165 and isoleucine 191. 192-193 contributes to the substrate binding site; the sequence is NT. Residues glycine 217, 243–244, and 265–266 contribute to the FMN site; these read GG and GT.

This sequence belongs to the dihydroorotate dehydrogenase family. Type 1 subfamily. In terms of assembly, heterotetramer of 2 PyrK and 2 PyrD type B subunits. FMN serves as cofactor.

Its subcellular location is the cytoplasm. The enzyme catalyses (S)-dihydroorotate + NAD(+) = orotate + NADH + H(+). The protein operates within pyrimidine metabolism; UMP biosynthesis via de novo pathway; orotate from (S)-dihydroorotate (NAD(+) route): step 1/1. Catalyzes the conversion of dihydroorotate to orotate with NAD(+) as electron acceptor. This chain is Dihydroorotate dehydrogenase B (NAD(+)), catalytic subunit (pyrD), found in Bacillus cereus (strain ATCC 14579 / DSM 31 / CCUG 7414 / JCM 2152 / NBRC 15305 / NCIMB 9373 / NCTC 2599 / NRRL B-3711).